The following is a 123-amino-acid chain: Small ribosomal subunit protein bS18 (123 aa).

Residues 1–10 are compositionally biased toward polar residues; sequence MADETTVSTP. The interval 1–52 is disordered; that stretch reads MADETTVSTPAASGTETPSTGGGGAPQGRPQGGPRGDRGPRPGGSGRDGGRK. Over residues 20 to 34 the composition is skewed to gly residues; sequence TGGGGAPQGRPQGGP.

This sequence belongs to the bacterial ribosomal protein bS18 family. In terms of assembly, part of the 30S ribosomal subunit. Forms a tight heterodimer with protein bS6.

Its function is as follows. Binds as a heterodimer with protein bS6 to the central domain of the 16S rRNA, where it helps stabilize the platform of the 30S subunit. This is Small ribosomal subunit protein bS18 from Koribacter versatilis (strain Ellin345).